Reading from the N-terminus, the 98-residue chain is uncharacterized protein (98 aa).

This is an uncharacterized protein from Human cytomegalovirus (strain AD169) (HHV-5).